A 258-amino-acid polypeptide reads, in one-letter code: HLA class II histocompatibility antigen, DP beta 1 chain (258 aa).

Residues 1–29 (MMVLQVSAAPRTVALTALLMVLLTSVVQG) form the signal peptide. A beta-1 region spans residues 30–121 (RATPENYLFQ…LGGPMTLQRR (92 aa)). Residues 30 to 225 (RATPENYLFQ…KAQSDSARSK (196 aa)) are Extracellular-facing. Disulfide bonds link C44/C106 and C144/C200. N48 is a glycosylation site (N-linked (GlcNAc...) asparagine). The tract at residues 122–215 (VQPRVNVSPS…SLDSPVTVEW (94 aa)) is beta-2. Residues 124–212 (PRVNVSPSKK…EHTSLDSPVT (89 aa)) form the Ig-like C1-type domain. A connecting peptide region spans residues 216 to 225 (KAQSDSARSK). The helical transmembrane segment at 226–246 (TLTGAGGFVLGLIICGVGIFM) threads the bilayer. The Cytoplasmic portion of the chain corresponds to 247-258 (HRRSKKVQRGSA).

Belongs to the MHC class II family. Heterodimer of an alpha and a beta subunit; also referred as MHC class II molecule. In the endoplasmic reticulum (ER) it forms a heterononamer; 3 MHC class II molecules bind to a CD74 homotrimer (also known as invariant chain or HLA class II histocompatibility antigen gamma chain). In the endosomal/lysosomal system; CD74 undergoes sequential degradation by various proteases; leaving a small fragment termed CLIP on each MHC class II molecule. MHC class II molecule interacts with HLA_DM, and HLA_DO in B-cells, in order to release CLIP and facilitate the binding of antigenic peptides.

The protein localises to the cell membrane. It is found in the endoplasmic reticulum membrane. It localises to the golgi apparatus. The protein resides in the trans-Golgi network membrane. Its subcellular location is the endosome membrane. The protein localises to the lysosome membrane. Functionally, binds peptides derived from antigens that access the endocytic route of antigen presenting cells (APC) and presents them on the cell surface for recognition by the CD4 T-cells. The peptide binding cleft accommodates peptides of 10-30 residues. The peptides presented by MHC class II molecules are generated mostly by degradation of proteins that access the endocytic route, where they are processed by lysosomal proteases and other hydrolases. Exogenous antigens that have been endocytosed by the APC are thus readily available for presentation via MHC II molecules, and for this reason this antigen presentation pathway is usually referred to as exogenous. As membrane proteins on their way to degradation in lysosomes as part of their normal turn-over are also contained in the endosomal/lysosomal compartments, exogenous antigens must compete with those derived from endogenous components. Autophagy is also a source of endogenous peptides, autophagosomes constitutively fuse with MHC class II loading compartments. In addition to APCs, other cells of the gastrointestinal tract, such as epithelial cells, express MHC class II molecules and CD74 and act as APCs, which is an unusual trait of the GI tract. To produce a MHC class II molecule that presents an antigen, three MHC class II molecules (heterodimers of an alpha and a beta chain) associate with a CD74 trimer in the ER to form a heterononamer. Soon after the entry of this complex into the endosomal/lysosomal system where antigen processing occurs, CD74 undergoes a sequential degradation by various proteases, including CTSS and CTSL, leaving a small fragment termed CLIP (class-II-associated invariant chain peptide). The removal of CLIP is facilitated by HLA-DM via direct binding to the alpha-beta-CLIP complex so that CLIP is released. HLA-DM stabilizes MHC class II molecules until primary high affinity antigenic peptides are bound. The MHC II molecule bound to a peptide is then transported to the cell membrane surface. In B-cells, the interaction between HLA-DM and MHC class II molecules is regulated by HLA-DO. Primary dendritic cells (DCs) also to express HLA-DO. Lysosomal microenvironment has been implicated in the regulation of antigen loading into MHC II molecules, increased acidification produces increased proteolysis and efficient peptide loading. The chain is HLA class II histocompatibility antigen, DP beta 1 chain (HLA-DPB1) from Homo sapiens (Human).